The primary structure comprises 482 residues: Glutamyl-tRNA(Gln) amidotransferase subunit A (482 aa).

Catalysis depends on charge relay system residues lysine 80 and serine 159. Serine 183 acts as the Acyl-ester intermediate in catalysis.

Belongs to the amidase family. GatA subfamily. As to quaternary structure, heterotrimer of A, B and C subunits.

The enzyme catalyses L-glutamyl-tRNA(Gln) + L-glutamine + ATP + H2O = L-glutaminyl-tRNA(Gln) + L-glutamate + ADP + phosphate + H(+). In terms of biological role, allows the formation of correctly charged Gln-tRNA(Gln) through the transamidation of misacylated Glu-tRNA(Gln) in organisms which lack glutaminyl-tRNA synthetase. The reaction takes place in the presence of glutamine and ATP through an activated gamma-phospho-Glu-tRNA(Gln). This is Glutamyl-tRNA(Gln) amidotransferase subunit A from Neorickettsia sennetsu (strain ATCC VR-367 / Miyayama) (Ehrlichia sennetsu).